The following is a 732-amino-acid chain: Acylamino-acid-releasing enzyme (732 aa).

Residue Met1 is modified to N-acetylmethionine. Ser187 is subject to Phosphoserine. Catalysis depends on charge relay system residues Ser587, Asp675, and His707.

Belongs to the peptidase S9C family. Homotetramer. Expressed in the liver (at protein level).

The protein resides in the cytoplasm. It carries out the reaction Cleavage of an N-acetyl or N-formyl amino acid from the N-terminus of a polypeptide.. Its activity is regulated as follows. Homotetramerization is required for activity. Tetramerization results in the formation of a gated channel which is involved in substrate selection and substrate access to the catalytic sites. In terms of biological role, this enzyme catalyzes the hydrolysis of the N-terminal peptide bond of an N-acetylated peptide to generate an N-acetylated amino acid and a peptide with a free N-terminus. It preferentially cleaves off Ac-Ala, Ac-Met and Ac-Ser. Also, involved in the degradation of oxidized and glycated proteins. This chain is Acylamino-acid-releasing enzyme (APEH), found in Sus scrofa (Pig).